The primary structure comprises 279 residues: Thymidylate synthase (279 aa).

DUMP is bound at residue 141-142 (RR). Cys161 (nucleophile) is an active-site residue. Residues 181–184 (RSND), Asn192, and 222–224 (HVY) contribute to the dUMP site. A (6R)-5,10-methylene-5,6,7,8-tetrahydrofolate-binding site is contributed by Asp184. Position 278 (Ala278) interacts with (6R)-5,10-methylene-5,6,7,8-tetrahydrofolate.

The protein belongs to the thymidylate synthase family. Bacterial-type ThyA subfamily. Homodimer.

The protein localises to the cytoplasm. The catalysed reaction is dUMP + (6R)-5,10-methylene-5,6,7,8-tetrahydrofolate = 7,8-dihydrofolate + dTMP. Its pathway is pyrimidine metabolism; dTTP biosynthesis. In terms of biological role, catalyzes the reductive methylation of 2'-deoxyuridine-5'-monophosphate (dUMP) to 2'-deoxythymidine-5'-monophosphate (dTMP) while utilizing 5,10-methylenetetrahydrofolate (mTHF) as the methyl donor and reductant in the reaction, yielding dihydrofolate (DHF) as a by-product. This enzymatic reaction provides an intracellular de novo source of dTMP, an essential precursor for DNA biosynthesis. This Bacillus mojavensis protein is Thymidylate synthase.